The primary structure comprises 676 residues: Basic proline-rich protein (676 aa).

The signal sequence occupies residues 1–16; it reads MLPILLSVALLALSSA. Ser28 and Ser30 each carry phosphoserine. The interval 29–676 is disordered; the sequence is NSAEKFLRPP…PRPPPGPPPQ (648 aa). Pro residues-rich tracts occupy residues 36-50, 71-424, and 442-676; these read RPPP…PPPE, GPAP…PPAD, and PPPA…PPPQ. Positions 409–457 are excised as a propeptide; sequence APPGARPPPPPPPPADEPQQGPAPSGDKPKKKPPPPAGPPPPGPPSPGP.

As to expression, acinar cells and secretory granules of the parotid gland.

It localises to the secreted. In terms of biological role, the parotid hormone stimulates dentinal fluid transport in teeth. The chain is Basic proline-rich protein from Sus scrofa (Pig).